The sequence spans 91 residues: Alpha-latrotoxin associated low molecular weight protein SGV150-311 (91 aa).

The signal sequence occupies residues 1 to 18 (MNVLHFLILLMSVVSVFC).

This sequence belongs to the arthropod CHH/MIH/GIH/VIH hormone family. Expressed by the venom gland.

It is found in the secreted. Functionally, may increase the toxicity of alpha-latrotoxin and/or other venom components. Is non-toxic to mice and to the cockroach Periplaneta americana. This is Alpha-latrotoxin associated low molecular weight protein SGV150-311 from Steatoda grossa (False black widow).